Consider the following 295-residue polypeptide: UDP-N-acetylenolpyruvoylglucosamine reductase (295 aa).

The region spanning 24–188 (KVGGNAEIFF…LKAIFKANKG (165 aa)) is the FAD-binding PCMH-type domain. Arg-168 is a catalytic residue. The Proton donor role is filled by Ser-217. Glu-287 is an active-site residue.

Belongs to the MurB family. The cofactor is FAD.

It localises to the cytoplasm. The enzyme catalyses UDP-N-acetyl-alpha-D-muramate + NADP(+) = UDP-N-acetyl-3-O-(1-carboxyvinyl)-alpha-D-glucosamine + NADPH + H(+). It participates in cell wall biogenesis; peptidoglycan biosynthesis. Cell wall formation. The protein is UDP-N-acetylenolpyruvoylglucosamine reductase of Rickettsia typhi (strain ATCC VR-144 / Wilmington).